The following is a 267-amino-acid chain: Dynein axonemal assembly factor 19 homolog (267 aa).

2 disordered regions span residues 86 to 111 (ISQS…RDWR) and 226 to 250 (HQGK…VDPC).

This sequence belongs to the DNAAF19/PR46b family. Homodimer.

It is found in the cytoplasm. The protein resides in the cell projection. Its subcellular location is the cilium. The protein localises to the flagellum. Functionally, dynein-attachment factor required for cilia motility. The polypeptide is Dynein axonemal assembly factor 19 homolog (PR46b) (Chlamydomonas reinhardtii (Chlamydomonas smithii)).